The chain runs to 426 residues: Putative F-box protein At4g38870 (426 aa).

In terms of domain architecture, F-box spans 47 to 92 (SVNSELLPVDLIMEILKKLSLKPLIRFLCVSKLWASIIRDPYFMKL).

The polypeptide is Putative F-box protein At4g38870 (Arabidopsis thaliana (Mouse-ear cress)).